Reading from the N-terminus, the 387-residue chain is Prostatic acid phosphatase (387 aa).

A signal peptide spans 1-34 (MRNAALLMTRATSLRLSLLLLLSFLPDLDGGVRA). R45 provides a ligand contact to substrate. H46 serves as the catalytic Nucleophile. Position 49 (R49) interacts with substrate. N96 carries an N-linked (GlcNAc...) asparagine glycan. R113 lines the substrate pocket. 3 disulfides stabilise this stretch: C163-C374, C217-C315, and C349-C353. A glycan (N-linked (GlcNAc...) asparagine) is linked at N222. H291 provides a ligand contact to substrate. D292 serves as the catalytic Proton donor. An N-linked (GlcNAc...) asparagine glycan is attached at N335.

It belongs to the histidine acid phosphatase family. As to quaternary structure, homodimer; dimer formation is required for phosphatase activity.

The protein resides in the secreted. It catalyses the reaction a phosphate monoester + H2O = an alcohol + phosphate. It carries out the reaction 1-(9Z-octadecenoyl)-sn-glycero-3-phosphate + H2O = 1-(9Z-octadecenoyl)-sn-glycerol + phosphate. The enzyme catalyses O-phospho-L-tyrosyl-[protein] + H2O = L-tyrosyl-[protein] + phosphate. A non-specific tyrosine phosphatase that dephosphorylates a diverse number of substrates under acidic conditions (pH 4-6) including alkyl, aryl, and acyl orthophosphate monoesters and phosphorylated proteins. Has lipid phosphatase activity and inactivates lysophosphatidic acid in seminal plasma. The chain is Prostatic acid phosphatase (ACP3) from Bos taurus (Bovine).